Consider the following 478-residue polypeptide: Sorting nexin-4 (478 aa).

Basic and acidic residues predominate over residues 1–10 (MAVIDQHQDD). The segment at 1–56 (MAVIDQHQDDFSNVSWNTDEHTAAESSSSVTATEFDDTERNGHNAYESDAPGSDGQ) is disordered. Low complexity predominate over residues 24–33 (AESSSSVTAT). The region spanning 58-180 (VLDCVVSEPL…IFLESPDWNA (123 aa)) is the PX domain. Residues arginine 101, threonine 103, lysine 127, and arginine 146 each coordinate a 1,2-diacyl-sn-glycero-3-phospho-(1D-myo-inositol-3-phosphate). The interval 459–478 (EGVSGTRSTGVEPPGRRLAD) is disordered.

This sequence belongs to the sorting nexin family. As to quaternary structure, interacts with the mitochondrial prohibitin complex subunits PHB1 and PHB2; the interaction is direct and plays a role in mitophagy.

It is found in the cytoplasm. It localises to the cytosol. Its subcellular location is the preautophagosomal structure membrane. The protein resides in the endosome membrane. The protein localises to the mitochondrion membrane. It is found in the lipid droplet. Its function is as follows. Sorting nexin, involved in the separation or division of vacuoles throughout the entire life cycle of the cells. Involved in retrieval of late-Golgi SNAREs from post-Golgi endosomes to the trans-Golgi network, for cytoplasm to vacuole transport (Cvt), and autophagy of large cargos including mitophagy, pexophagy and glycophagy. Required for the switch to necrotrophic growth. The polypeptide is Sorting nexin-4 (Colletotrichum higginsianum (strain IMI 349063) (Crucifer anthracnose fungus)).